The following is a 129-amino-acid chain: MNWLLVIAGAAAGAPLRYLTDRAVQTRHDTVFPWGTFTVNVTASLLLGLVAGAAGAGAPPAWVASEQVVSLVGTGLCGALSTYSTFSYETLRLAEDGARLLAAANVAGSVLAAFGAAALGAALARAVWG.

3 helical membrane-spanning segments follow: residues A43–V63, V68–Y88, and L100–G120. The Na(+) site is built by G78 and S81.

This sequence belongs to the fluoride channel Fluc/FEX (TC 1.A.43) family.

It localises to the cell membrane. The enzyme catalyses fluoride(in) = fluoride(out). Na(+) is not transported, but it plays an essential structural role and its presence is essential for fluoride channel function. In terms of biological role, fluoride-specific ion channel. Important for reducing fluoride concentration in the cell, thus reducing its toxicity. This is Fluoride-specific ion channel FluC 1 from Frankia casuarinae (strain DSM 45818 / CECT 9043 / HFP020203 / CcI3).